Reading from the N-terminus, the 586-residue chain is Clathrin heavy chain linker domain-containing protein 1 (586 aa).

Positions 174 to 232 form a coiled coil; sequence MNLDALTKYMKHLEDKYAEIKQAMLIKYVPAQRKADLDEEMIVLLKRRDVAENLNKKLQ.

This is Clathrin heavy chain linker domain-containing protein 1 (CLHC1) from Homo sapiens (Human).